Here is a 158-residue protein sequence, read N- to C-terminus: UPF0303 protein SCO2848 (158 aa).

Belongs to the UPF0303 family.

The polypeptide is UPF0303 protein SCO2848 (Streptomyces coelicolor (strain ATCC BAA-471 / A3(2) / M145)).